The primary structure comprises 317 residues: Ret finger protein-like 3 (317 aa).

An RING-type zinc finger spans residues Cys-40–Ser-82. In terms of domain architecture, B30.2/SPRY spans Glu-107–Leu-301.

In terms of tissue distribution, expressed during neurogenesis in differentiating human embryonic stem cells and in the developing human neocortex.

It is found in the cytoplasm. The protein localises to the nucleus. Functionally, (Microbial infection) Stimulates the activity of Human Immunodeficiency Virus 1/HIV-1 pre-integration complex. This chain is Ret finger protein-like 3 (RFPL3), found in Homo sapiens (Human).